Reading from the N-terminus, the 260-residue chain is Deoxyribonuclease-1 (260 aa).

Asn18 carries N-linked (GlcNAc...) asparagine glycosylation. Glu78 is a catalytic residue. Cys101 and Cys104 form a disulfide bridge. Residue His134 is part of the active site. A disulfide bridge links Cys173 with Cys209.

The protein belongs to the DNase I family. Ca(2+) is required as a cofactor. Mg(2+) serves as cofactor.

It is found in the secreted. The protein resides in the zymogen granule. It localises to the nucleus envelope. The enzyme catalyses Endonucleolytic cleavage to 5'-phosphodinucleotide and 5'-phosphooligonucleotide end-products.. In terms of biological role, serum endocuclease secreted into body fluids by a wide variety of exocrine and endocrine organs. Expressed by non-hematopoietic tissues and preferentially cleaves protein-free DNA. Among other functions, seems to be involved in cell death by apoptosis. Binds specifically to G-actin and blocks actin polymerization. Together with DNASE1L3, plays a key role in degrading neutrophil extracellular traps (NETs). NETs are mainly composed of DNA fibers and are released by neutrophils to bind pathogens during inflammation. Degradation of intravascular NETs by DNASE1 and DNASE1L3 is required to prevent formation of clots that obstruct blood vessels and cause organ damage following inflammation. The chain is Deoxyribonuclease-1 (DNASE1) from Ovis aries (Sheep).